An 83-amino-acid polypeptide reads, in one-letter code: Putative defensin-like protein 150 (83 aa).

The N-terminal stretch at 1–25 is a signal peptide; sequence MMGKHIQLSFAILIMFTIFVLGAVG. 4 disulfides stabilise this stretch: Cys35/Cys83, Cys44/Cys64, Cys49/Cys77, and Cys53/Cys79.

It belongs to the DEFL family.

The protein localises to the secreted. This is Putative defensin-like protein 150 (LCR32) from Arabidopsis thaliana (Mouse-ear cress).